The sequence spans 297 residues: Putative 6-phosphogluconate dehydrogenase YqeC (297 aa).

NAD(+) is bound by residues 7-12 and Asn-94; that span reads GLGKMG. Residues Asn-94 and 120–122 contribute to the substrate site; that span reads SGG. Lys-170 serves as the catalytic Proton acceptor. 173–174 is a substrate binding site; the sequence is HN. Glu-177 (proton donor) is an active-site residue. Tyr-178 and Arg-268 together coordinate substrate.

The protein belongs to the 6-phosphogluconate dehydrogenase family.

In terms of biological role, may act as NAD-dependent 6-P-gluconate dehydrogenase. The protein is Putative 6-phosphogluconate dehydrogenase YqeC (yqeC) of Bacillus subtilis (strain 168).